We begin with the raw amino-acid sequence, 218 residues long: Pyridoxine/pyridoxamine 5'-phosphate oxidase (218 aa).

Residues 14–17 and K72 contribute to the substrate site; that span reads RREY. FMN-binding positions include 67 to 72, 82 to 83, R88, K89, and Q111; these read RIVLLK and YT. Y129, R133, and S137 together coordinate substrate. FMN is bound by residues 146 to 147 and W191; that span reads QS. Residue 197-199 coordinates substrate; it reads RLH. R201 provides a ligand contact to FMN.

This sequence belongs to the pyridoxamine 5'-phosphate oxidase family. Homodimer. FMN serves as cofactor.

It catalyses the reaction pyridoxamine 5'-phosphate + O2 + H2O = pyridoxal 5'-phosphate + H2O2 + NH4(+). It carries out the reaction pyridoxine 5'-phosphate + O2 = pyridoxal 5'-phosphate + H2O2. The protein operates within cofactor metabolism; pyridoxal 5'-phosphate salvage; pyridoxal 5'-phosphate from pyridoxamine 5'-phosphate: step 1/1. It participates in cofactor metabolism; pyridoxal 5'-phosphate salvage; pyridoxal 5'-phosphate from pyridoxine 5'-phosphate: step 1/1. Catalyzes the oxidation of either pyridoxine 5'-phosphate (PNP) or pyridoxamine 5'-phosphate (PMP) into pyridoxal 5'-phosphate (PLP). The polypeptide is Pyridoxine/pyridoxamine 5'-phosphate oxidase (Escherichia coli O45:K1 (strain S88 / ExPEC)).